Consider the following 690-residue polypeptide: Elongation factor G (690 aa).

Positions 8 to 283 constitute a tr-type G domain; the sequence is EDYRNFGIMA…AVVDYLPSPL (276 aa). GTP-binding positions include 17–24, 81–85, and 135–138; these read AHIDAGKT, DTPGH, and NKMD.

It belongs to the TRAFAC class translation factor GTPase superfamily. Classic translation factor GTPase family. EF-G/EF-2 subfamily.

It is found in the cytoplasm. Functionally, catalyzes the GTP-dependent ribosomal translocation step during translation elongation. During this step, the ribosome changes from the pre-translocational (PRE) to the post-translocational (POST) state as the newly formed A-site-bound peptidyl-tRNA and P-site-bound deacylated tRNA move to the P and E sites, respectively. Catalyzes the coordinated movement of the two tRNA molecules, the mRNA and conformational changes in the ribosome. This Bradyrhizobium sp. (strain BTAi1 / ATCC BAA-1182) protein is Elongation factor G.